The primary structure comprises 384 residues: MGACVVMTDINISSGLDSNATGITAFSMPGWQLALWTAAYLALVLVAVMGNATVIWIILAHQRMRTVTNYFIVNLALADLCMAAFNAAFNFVYASHNIWYFGRAFCYFQNLFPITAMFVSIYSMTAIAADRYMAIVHPFQPRLSAPGTRAVIAGIWLVALALAFPQCFYSTITTDEGATKCVVAWPEDSGGKMLLLYHLIVIALIYFLPLVVMFVAYSVIGLTLWRRSVPGHQAHGANLRHLQAKKKFVKTMVLVVVTFAICWLPYHLYFILGTFQEDIYCHKFIQQVYLALFWLAMSSTMYNPIIYCCLNHRFRSGFRLAFRCCPWVTPTEEDKMELTYTPSLSTRVNRCHTKEIFFMSGDVAPSEAVNGQAESPQAGVSTEP.

Residues 1–32 (MGACVVMTDINISSGLDSNATGITAFSMPGWQ) lie on the Extracellular side of the membrane. Asn11 and Asn19 each carry an N-linked (GlcNAc...) asparagine glycan. Residues 33 to 56 (LALWTAAYLALVLVAVMGNATVIW) traverse the membrane as a helical segment. The Cytoplasmic portion of the chain corresponds to 57 to 69 (IILAHQRMRTVTN). A helical membrane pass occupies residues 70–90 (YFIVNLALADLCMAAFNAAFN). The Extracellular segment spans residues 91–107 (FVYASHNIWYFGRAFCY). A disulfide bridge connects residues Cys106 and Cys181. The helical transmembrane segment at 108 to 129 (FQNLFPITAMFVSIYSMTAIAA) threads the bilayer. The Cytoplasmic portion of the chain corresponds to 130–149 (DRYMAIVHPFQPRLSAPGTR). The helical transmembrane segment at 150–170 (AVIAGIWLVALALAFPQCFYS) threads the bilayer. The Extracellular segment spans residues 171–196 (TITTDEGATKCVVAWPEDSGGKMLLL). Residues 197-218 (YHLIVIALIYFLPLVVMFVAYS) form a helical membrane-spanning segment. Topologically, residues 219–251 (VIGLTLWRRSVPGHQAHGANLRHLQAKKKFVKT) are cytoplasmic. A helical membrane pass occupies residues 252 to 272 (MVLVVVTFAICWLPYHLYFIL). The Extracellular portion of the chain corresponds to 273–290 (GTFQEDIYCHKFIQQVYL). A helical transmembrane segment spans residues 291 to 310 (ALFWLAMSSTMYNPIIYCCL). Residues 311 to 384 (NHRFRSGFRL…SPQAGVSTEP (74 aa)) are Cytoplasmic-facing. Residue Cys324 is the site of S-palmitoyl cysteine attachment.

The protein belongs to the G-protein coupled receptor 1 family.

Its subcellular location is the cell membrane. Functionally, this is a receptor for the tachykinin neuropeptide substance K (neurokinin A). It is associated with G proteins that activate a phosphatidylinositol-calcium second messenger system. The rank order of affinity of this receptor to tachykinins is: substance K &gt; neuromedin-K &gt; substance P. This chain is Substance-K receptor (TACR2), found in Bos taurus (Bovine).